The sequence spans 302 residues: Ribostamycin:4-(gamma-L-glutamylamino)-(S)-2-hydroxybutanoyl-[BtrI acyl-carrier protein] 4-(gamma-L-glutamylamino)-(S)-2-hydroxybutanoate transferase (302 aa).

The catalysed reaction is 4-(gamma-L-glutamylamino)-(2S)-2-hydroxybutanoyl-[BtrI ACP] + ribostamycin = gamma-L-glutamyl-butirosin B + holo-[BtrI ACP] + H(+). It functions in the pathway antibiotic biosynthesis; butirosin biosynthesis. Aminoglycoside acyltransferase that attaches the (S)-4-amino-2-hydroxybutyrate (AHBA) side chain from the acyl carrier protein BtrI to the aminoglycoside ribostamycin in the biosynthetic pathway of butirosin. The AHBA side chain protects the antibiotic from several common resistance mechanisms. This Niallia circulans (Bacillus circulans) protein is Ribostamycin:4-(gamma-L-glutamylamino)-(S)-2-hydroxybutanoyl-[BtrI acyl-carrier protein] 4-(gamma-L-glutamylamino)-(S)-2-hydroxybutanoate transferase (btrH).